The primary structure comprises 1481 residues: Cystic fibrosis transmembrane conductance regulator (1481 aa).

Residues 1–77 (MQRSPLEKAS…KLINALRRCF (77 aa)) are Cytoplasmic-facing. Residues 78 to 98 (FWRFMFYGIILYLGEVTKAVQ) form a helical membrane-spanning segment. Positions 81–365 (FMFYGIILYL…WAVQTWYDSL (285 aa)) constitute an ABC transmembrane type-1 1 domain. At 99-122 (PLLLGRIIASYDPDNKVERSIAIY) the chain is on the extracellular side. A helical membrane pass occupies residues 123–146 (LGIGLCLLFIVRTLLLHPAIFGLH). The Cytoplasmic portion of the chain corresponds to 147–195 (HIGMQMRIAMFSLIYKKTLKLSSRVLDKISIGQLVSLLSNNLNKFDEGL). Residues 196–216 (ALAHFVWIAPLQVTLLMGLLW) form a helical membrane-spanning segment. At 217-222 (ELLQAF) the chain is on the extracellular side. The chain crosses the membrane as a helical span at residues 223 to 243 (TFCGLAFLVVLAFLQAGLGKM). At 244 to 298 (MMKYRDQRAGKINERLVITSEIIENIQSVKAYCWEEAMEKIIENLRQTELKLTRK) the chain is on the cytoplasmic side. Residues 299-319 (AAYVRYLNSSAFFFSGFFVVF) traverse the membrane as a helical segment. Residues 320–339 (LSVLPYALLKGIILRKIFTT) are Extracellular-facing. A helical membrane pass occupies residues 340 to 358 (ISFCIVLRMAVTRQFPWAV). The Cytoplasmic segment spans residues 359 to 858 (QTWYDSLGAI…YLRYITVHKS (500 aa)). ATP contacts are provided by residues Trp-401, 457 to 464 (GSTGAGKT), and Gln-492. The ABC transporter 1 domain occupies 423 to 645 (NGDNNLFFSN…RPDFSSKLMG (223 aa)). Cys-523 carries S-palmitoyl cysteine lipidation. Residues Ser-548 and Ser-659 each carry the phosphoserine modification. Positions 653 to 831 (TAERRNSIIT…EEINEEDLRD (179 aa)) are disordered R region. Ser-669 carries the phosphoserine; by PKA modification. The residue at position 685 (Ser-685) is a Phosphoserine. Residue Lys-687 forms a Glycyl lysine isopeptide (Lys-Gly) (interchain with G-Cter in ubiquitin) linkage. Phosphoserine is present on residues Ser-699 and Ser-711. Thr-716 carries the phosphothreonine modification. 5 positions are modified to phosphoserine: Ser-736, Ser-767, Ser-790, Ser-795, and Ser-813. A helical transmembrane segment spans residues 859–879 (LMFVLIWCLVVFLAEVAASLV). Residues 859–1155 (LMFVLIWCLV…AVNSSIDVDS (297 aa)) form the ABC transmembrane type-1 2 domain. Over 880-918 (VLCLFPKILFQDKGNSTKSANNSYAVIITSTSSYYIFYI) the chain is Extracellular. 2 N-linked (GlcNAc...) asparagine glycosylation sites follow: Asn-894 and Asn-900. The chain crosses the membrane as a discontinuously helical span at residues 919–939 (YVGVADTLLALGLFRGLPLVH). The Cytoplasmic portion of the chain corresponds to 940–990 (TLITVSKTLHHKMLQSVLQAPMSTLNTLKTGGILNRFSKDIAVLDDLLPLT). The chain crosses the membrane as a helical span at residues 991–1011 (IFDFVQLLLIVIGAVVVVSVL). Over 1012 to 1013 (QP) the chain is Extracellular. The helical transmembrane segment at 1014–1034 (YIFLATVPVIAAFILLRAYFL) threads the bilayer. The Cytoplasmic segment spans residues 1035–1095 (HTSQQLKQLE…TANWFLYLST (61 aa)). The helical transmembrane segment at 1096-1116 (LRWFQMRIEMIFVIFFIAVTF) threads the bilayer. Residues 1117-1130 (ISILTTGEGEGRVG) are Extracellular-facing. The chain crosses the membrane as a helical span at residues 1131 to 1151 (IILTLAMNIMGTLQWAVNSSI). Residues 1152–1481 (DVDSLMRSVS…TEEEVQETKL (330 aa)) are Cytoplasmic-facing. The ABC transporter 2 domain maps to 1211–1444 (MTVKDLTAKY…KSLFRQAISP (234 aa)). ATP-binding positions include Tyr-1220 and 1245–1252 (GRTGSGKS). The interval 1387-1481 (RTLKQAFADC…TEEEVQETKL (95 aa)) is interaction with GORASP2. The S-palmitoyl cysteine moiety is linked to residue Cys-1396. The disordered stretch occupies residues 1452–1481 (PQRNSSRQKSRSNIAALKEETEEEVQETKL). Residues 1453-1464 (QRNSSRQKSRSN) show a composition bias toward low complexity. Ser-1457 is modified (phosphoserine). A compositionally biased stretch (acidic residues) spans 1471–1481 (ETEEEVQETKL). The PDZ-binding signature appears at 1479 to 1481 (TKL).

This sequence belongs to the ABC transporter superfamily. ABCC family. CFTR transporter (TC 3.A.1.202) subfamily. In terms of assembly, monomer; does not require oligomerization for channel activity. May form oligomers in the membrane. Interacts with SLC26A3, SLC26A6 and NHERF1. Interacts with SHANK2. Interacts with MYO6. Interacts (via C-terminus) with GOPC (via PDZ domain); this promotes CFTR internalization and thereby decreases channel activity. Interacts with SLC4A7 through NHERF1. Found in a complex with MYO5B and RAB11A. Interacts with ANO1. Interacts with SLC26A8. Interacts with AHCYL1; the interaction increases CFTR activity. Interacts with CSE1L. The core-glycosylated form interacts with GORASP2 (via PDZ GRASP-type 1 domain) in respone to ER stress. Interacts with MARCHF2; the interaction leads to CFTR ubiqtuitination and degradation. Interacts with ADGRG2. In terms of processing, N-glycosylated. Post-translationally, phosphorylated; cAMP treatment promotes phosphorylation and activates the channel. Dephosphorylation decreases the ATPase activity (in vitro). Phosphorylation at PKA sites activates the channel. Phosphorylation at PKC sites enhances the response to phosphorylation by PKA. Phosphorylated by AMPK; this inhibits channel activity. Ubiquitinated, leading to its degradation in the lysosome. Deubiquitination by USP10 in early endosomes enhances its endocytic recycling to the cell membrane. Ubiquitinated by RNF185 during ER stress. Ubiquitinated by MARCHF2.

Its subcellular location is the apical cell membrane. It localises to the early endosome membrane. The protein localises to the cell membrane. The protein resides in the recycling endosome membrane. It is found in the endoplasmic reticulum membrane. Its subcellular location is the nucleus. The enzyme catalyses ATP + H2O + closed Cl(-) channel = ADP + phosphate + open Cl(-) channel.. It carries out the reaction chloride(in) = chloride(out). The catalysed reaction is hydrogencarbonate(in) = hydrogencarbonate(out). It catalyses the reaction ATP + H2O = ADP + phosphate + H(+). Its function is as follows. Epithelial ion channel that plays an important role in the regulation of epithelial ion and water transport and fluid homeostasis. Mediates the transport of chloride ions across the cell membrane. Possesses an intrinsic ATPase activity and utilizes ATP to gate its channel; the passive flow of anions through the channel is gated by cycles of ATP binding and hydrolysis by the ATP-binding domains. The ion channel is also permeable to HCO(3)(-); selectivity depends on the extracellular chloride concentration. Exerts its function also by modulating the activity of other ion channels and transporters. Contributes to the regulation of the pH and the ion content of the epithelial fluid layer. Modulates the activity of the epithelial sodium channel (ENaC) complex, in part by regulating the cell surface expression of the ENaC complex. May regulate bicarbonate secretion and salvage in epithelial cells by regulating the transporter SLC4A7. Can inhibit the chloride channel activity of ANO1. Plays a role in the chloride and bicarbonate homeostasis during sperm epididymal maturation and capacitation. The sequence is that of Cystic fibrosis transmembrane conductance regulator from Muntiacus muntjak (Barking deer).